The following is a 38-amino-acid chain: Photosystem II reaction center protein L (38 aa).

A helical membrane pass occupies residues 17–37 (SLYWGLLLIFVLAVLFSNYFF).

It belongs to the PsbL family. As to quaternary structure, PSII is composed of 1 copy each of membrane proteins PsbA, PsbB, PsbC, PsbD, PsbE, PsbF, PsbH, PsbI, PsbJ, PsbK, PsbL, PsbM, PsbT, PsbX, PsbY, PsbZ, Psb30/Ycf12, at least 3 peripheral proteins of the oxygen-evolving complex and a large number of cofactors. It forms dimeric complexes.

The protein resides in the plastid. It is found in the chloroplast thylakoid membrane. In terms of biological role, one of the components of the core complex of photosystem II (PSII). PSII is a light-driven water:plastoquinone oxidoreductase that uses light energy to abstract electrons from H(2)O, generating O(2) and a proton gradient subsequently used for ATP formation. It consists of a core antenna complex that captures photons, and an electron transfer chain that converts photonic excitation into a charge separation. This subunit is found at the monomer-monomer interface and is required for correct PSII assembly and/or dimerization. The chain is Photosystem II reaction center protein L from Huperzia lucidula (Shining clubmoss).